We begin with the raw amino-acid sequence, 466 residues long: Cysteine--tRNA ligase (466 aa).

C28 provides a ligand contact to Zn(2+). The short motif at P30–N40 is the 'HIGH' region element. 3 residues coordinate Zn(2+): C208, H233, and E237. The 'KMSKS' region signature appears at K265–S269. K268 serves as a coordination point for ATP.

It belongs to the class-I aminoacyl-tRNA synthetase family. In terms of assembly, monomer. Zn(2+) serves as cofactor.

It localises to the cytoplasm. It carries out the reaction tRNA(Cys) + L-cysteine + ATP = L-cysteinyl-tRNA(Cys) + AMP + diphosphate. This Staphylococcus haemolyticus (strain JCSC1435) protein is Cysteine--tRNA ligase.